The following is a 214-amino-acid chain: Cytochrome b (214 aa).

4 helical membrane-spanning segments follow: residues 31-51 (FGSM…FLAI), 75-96 (WIMQ…YIHI), 111-131 (WLSG…GYVL), and 176-196 (FFAL…IHIL). Residues His81 and His95 each coordinate heme b. Positions 180 and 194 each coordinate heme b. His199 contacts a ubiquinone.

This sequence belongs to the cytochrome b family. As to quaternary structure, the cytochrome bc1 complex contains 3 respiratory subunits (MT-CYB, CYC1 and UQCRFS1), 2 core proteins (UQCRC1 and UQCRC2) and probably 6 low-molecular weight proteins. The cofactor is heme b.

The protein resides in the mitochondrion inner membrane. Component of the ubiquinol-cytochrome c reductase complex (complex III or cytochrome b-c1 complex) that is part of the mitochondrial respiratory chain. The b-c1 complex mediates electron transfer from ubiquinol to cytochrome c. Contributes to the generation of a proton gradient across the mitochondrial membrane that is then used for ATP synthesis. The sequence is that of Cytochrome b (MT-CYB) from Agkistrodon contortrix contortrix (Southern copperhead).